A 311-amino-acid chain; its full sequence is tRNA dimethylallyltransferase (311 aa).

9–16 (GPTAVGKT) lines the ATP pocket. 11–16 (TAVGKT) contributes to the substrate binding site. The interaction with substrate tRNA stretch occupies residues 34-37 (DSMQ).

This sequence belongs to the IPP transferase family. Monomer. It depends on Mg(2+) as a cofactor.

It catalyses the reaction adenosine(37) in tRNA + dimethylallyl diphosphate = N(6)-dimethylallyladenosine(37) in tRNA + diphosphate. Its function is as follows. Catalyzes the transfer of a dimethylallyl group onto the adenine at position 37 in tRNAs that read codons beginning with uridine, leading to the formation of N6-(dimethylallyl)adenosine (i(6)A). This chain is tRNA dimethylallyltransferase, found in Clostridium botulinum (strain Loch Maree / Type A3).